We begin with the raw amino-acid sequence, 437 residues long: MAGGIKVSVWSAVGPGPRCWGAGGGGGATWLLLVVAGCVVCGSADVNVVMLQESQVDMNSSQQFCYKNVLIPKWHDIWTRIQVRVNSSKLVRVTQVDNEEKLKELEQFSIWNFFSSFLKEKLNDTYVNVGLYSTKTCLKVEMIEKDTTYSVTVTRRFDPKLFLVFLLGLTLFFCGDLLSRSQIFYYSTGMSVGIVASLLIVIFMISKFMPKRSPIYVILVGGWSFSLYLIQLVFKNLQEIWRSYWHYLLSYILTVGFMSFAVCYKYGPLENERSINLLTWTLQLLGLGLMYSSIQIPHVAFALIVIALCTKNLEYPIHWLCSTYRRMCKASGKPVPPRLLTEEEYRIQGEVETQKALQELREFCNSPECSAWKTISRIQSPKRFADFVEGSFHLTPNEVSVHEQEYGLGSIFTQDEELSSEEEGSEYPTFTQNNFLT.

A signal peptide spans 1–44 (MAGGIKVSVWSAVGPGPRCWGAGGGGGATWLLLVVAGCVVCGSA). Residue asparagine 123 is glycosylated (N-linked (GlcNAc...) asparagine). Helical transmembrane passes span 159-179 (PKLF…DLLS), 183-203 (IFYY…IVIF), 214-234 (PIYV…QLVF), 244-264 (YWHY…AVCY), and 288-308 (GLMY…VIAL). The a; required for its colocalization with lamins at the nuclear envelope stretch occupies residues 184–295 (FYYSTGMSVG…GLGLMYSSIQ (112 aa)). Residues 334–403 (PVPPRLLTEE…LTPNEVSVHE (70 aa)) are b; required for interaction with RAN-GTP. Residues 334–437 (PVPPRLLTEE…PTFTQNNFLT (104 aa)) are required for nuclear localization. A phosphoserine mark is found at serine 366, serine 419, and serine 420. Over residues 415 to 425 (DEELSSEEEGS) the composition is skewed to acidic residues. Residues 415–437 (DEELSSEEEGSEYPTFTQNNFLT) are disordered. The span at 428-437 (PTFTQNNFLT) shows a compositional bias: polar residues.

Belongs to the NEMP family. As to quaternary structure, homooligomer. Interacts with RAN-GTP. Interacts with EMD. Phosphorylated. Phosphorylation may regulate its interaction with RAN-GTP. In terms of tissue distribution, in the ovary, expression is strongest in primordial follicle oocytes and rapidly declines as oocytes mature and move from the cortex (at protein level).

The protein localises to the nucleus inner membrane. It localises to the nucleus envelope. Its function is as follows. Together with EMD, contributes to nuclear envelope stiffness in germ cells. Required for female fertility. Essential for normal erythropoiesis. Required for efficient nuclear envelope opening and enucleation during the late stages of erythroblast maturation. The polypeptide is Nuclear envelope integral membrane protein 1 (Nemp1) (Mus musculus (Mouse)).